The primary structure comprises 235 residues: Enolase-phosphatase E1 (235 aa).

2 residues coordinate Mg(2+): D10 and E12. Substrate-binding positions include 130 to 131 (SS) and K169. Mg(2+) is bound at residue D194.

Belongs to the HAD-like hydrolase superfamily. MasA/MtnC family. In terms of assembly, monomer. Requires Mg(2+) as cofactor.

Its subcellular location is the cytoplasm. The protein localises to the nucleus. It carries out the reaction 5-methylsulfanyl-2,3-dioxopentyl phosphate + H2O = 1,2-dihydroxy-5-(methylsulfanyl)pent-1-en-3-one + phosphate. The protein operates within amino-acid biosynthesis; L-methionine biosynthesis via salvage pathway; L-methionine from S-methyl-5-thio-alpha-D-ribose 1-phosphate: step 3/6. Its pathway is amino-acid biosynthesis; L-methionine biosynthesis via salvage pathway; L-methionine from S-methyl-5-thio-alpha-D-ribose 1-phosphate: step 4/6. In terms of biological role, bifunctional enzyme that catalyzes the enolization of 2,3-diketo-5-methylthiopentyl-1-phosphate (DK-MTP-1-P) into the intermediate 2-hydroxy-3-keto-5-methylthiopentenyl-1-phosphate (HK-MTPenyl-1-P), which is then dephosphorylated to form the acireductone 1,2-dihydroxy-3-keto-5-methylthiopentene (DHK-MTPene). The sequence is that of Enolase-phosphatase E1 from Komagataella phaffii (strain GS115 / ATCC 20864) (Yeast).